Consider the following 294-residue polypeptide: Ribosomal protein L11 methyltransferase (294 aa).

S-adenosyl-L-methionine is bound by residues Thr-146, Gly-167, Asp-189, and Asn-231.

The protein belongs to the methyltransferase superfamily. PrmA family.

It localises to the cytoplasm. The catalysed reaction is L-lysyl-[protein] + 3 S-adenosyl-L-methionine = N(6),N(6),N(6)-trimethyl-L-lysyl-[protein] + 3 S-adenosyl-L-homocysteine + 3 H(+). Functionally, methylates ribosomal protein L11. This Aliivibrio fischeri (strain ATCC 700601 / ES114) (Vibrio fischeri) protein is Ribosomal protein L11 methyltransferase.